Consider the following 112-residue polypeptide: Ribonuclease P protein component (112 aa).

It belongs to the RnpA family. Consists of a catalytic RNA component (M1 or rnpB) and a protein subunit.

It carries out the reaction Endonucleolytic cleavage of RNA, removing 5'-extranucleotides from tRNA precursor.. Its function is as follows. RNaseP catalyzes the removal of the 5'-leader sequence from pre-tRNA to produce the mature 5'-terminus. It can also cleave other RNA substrates such as 4.5S RNA. The protein component plays an auxiliary but essential role in vivo by binding to the 5'-leader sequence and broadening the substrate specificity of the ribozyme. The sequence is that of Ribonuclease P protein component from Pelotomaculum thermopropionicum (strain DSM 13744 / JCM 10971 / SI).